We begin with the raw amino-acid sequence, 282 residues long: Putative 4-diphosphocytidyl-2-C-methyl-D-erythritol kinase (282 aa).

The active site involves Lys9. 93 to 103 provides a ligand contact to ATP; sequence PVSAGLAGGSA. The active site involves Asp135.

The protein belongs to the GHMP kinase family. IspE subfamily.

The enzyme catalyses 4-CDP-2-C-methyl-D-erythritol + ATP = 4-CDP-2-C-methyl-D-erythritol 2-phosphate + ADP + H(+). Its function is as follows. Catalyzes the phosphorylation of the position 2 hydroxy group of 4-diphosphocytidyl-2C-methyl-D-erythritol. The protein is Putative 4-diphosphocytidyl-2-C-methyl-D-erythritol kinase of Staphylococcus aureus (strain bovine RF122 / ET3-1).